Reading from the N-terminus, the 417-residue chain is MSKLILAVNAGSSSLKFQLIKMPEEKLVTKGVIERIGLSDSIFTIHVNGEKLTDIRDIHNHEEAVNIMLDSFKEHEMIKDITDIQGTGHRVVHGGETFPKSVVVTDEVESQIEELSELAPLHNPANLMGIRAFRKLLPEIPHVAVFDTSFHQTMPEQAYLYSLPYHYYEDYGIRKYGFHGTSHKYVSRRAAQIVGRPIEDLRIISCHIGNGASIAAIDGGESIDTSMGFTPLAGVTMGTRSGNLDPALIPFIMEKTGKTADEVLEILNKESGLLGLTGTSSDLRDLTEEAKHGRQRSRVALDLFASKIHKYIGSYAARMHGVDVIVFTAGIGENSHIIRGKVLEGLEFMGVYWDPKKNESLHGEEGYINYPHSPVKVLVVPTDEEVMISRDVIKYGKLNDNTPKKEEFDTNESIEVN.

A Mg(2+)-binding site is contributed by Asn-9. Lys-16 contributes to the ATP binding site. Substrate is bound at residue Arg-90. Asp-147 (proton donor/acceptor) is an active-site residue. ATP contacts are provided by residues 207 to 211 (HIGNG), 282 to 284 (DLR), and 330 to 334 (GIGEN). Mg(2+) is bound at residue Glu-384.

The protein belongs to the acetokinase family. As to quaternary structure, homodimer. Requires Mg(2+) as cofactor. Mn(2+) serves as cofactor.

Its subcellular location is the cytoplasm. It carries out the reaction acetate + ATP = acetyl phosphate + ADP. Its pathway is metabolic intermediate biosynthesis; acetyl-CoA biosynthesis; acetyl-CoA from acetate: step 1/2. Catalyzes the formation of acetyl phosphate from acetate and ATP. Can also catalyze the reverse reaction. This is Acetate kinase from Staphylococcus epidermidis (strain ATCC 35984 / DSM 28319 / BCRC 17069 / CCUG 31568 / BM 3577 / RP62A).